The chain runs to 89 residues: Large ribosomal subunit protein bL27 (89 aa).

The disordered stretch occupies residues 1-22 (MAHKKAGGSSRNGRDSESKRLG).

This sequence belongs to the bacterial ribosomal protein bL27 family.

The sequence is that of Large ribosomal subunit protein bL27 from Bartonella tribocorum (strain CIP 105476 / IBS 506).